A 432-amino-acid polypeptide reads, in one-letter code: Glutamyl-tRNA reductase (432 aa).

Residues 49-52, serine 101, 106-108, and glutamine 112 contribute to the substrate site; these read TCNR and EPQ. Cysteine 50 acts as the Nucleophile in catalysis. 181–186 contributes to the NADP(+) binding site; that stretch reads GAGETI. The disordered stretch occupies residues 407-432; that stretch reads FPEKPGYQHPPIATPIVRTDDADPAP.

The protein belongs to the glutamyl-tRNA reductase family. Homodimer.

The enzyme catalyses (S)-4-amino-5-oxopentanoate + tRNA(Glu) + NADP(+) = L-glutamyl-tRNA(Glu) + NADPH + H(+). It participates in porphyrin-containing compound metabolism; protoporphyrin-IX biosynthesis; 5-aminolevulinate from L-glutamyl-tRNA(Glu): step 1/2. Catalyzes the NADPH-dependent reduction of glutamyl-tRNA(Glu) to glutamate 1-semialdehyde (GSA). The protein is Glutamyl-tRNA reductase of Xanthomonas oryzae pv. oryzae (strain PXO99A).